Reading from the N-terminus, the 126-residue chain is Aspartate 1-decarboxylase (126 aa).

The Schiff-base intermediate with substrate; via pyruvic acid role is filled by Ser25. At Ser25 the chain carries Pyruvic acid (Ser). Substrate is bound at residue Thr57. The Proton donor role is filled by Tyr58. 73–75 contributes to the substrate binding site; sequence GAA.

Belongs to the PanD family. Heterooctamer of four alpha and four beta subunits. Pyruvate serves as cofactor. Is synthesized initially as an inactive proenzyme, which is activated by self-cleavage at a specific serine bond to produce a beta-subunit with a hydroxyl group at its C-terminus and an alpha-subunit with a pyruvoyl group at its N-terminus.

The protein resides in the cytoplasm. The enzyme catalyses L-aspartate + H(+) = beta-alanine + CO2. It participates in cofactor biosynthesis; (R)-pantothenate biosynthesis; beta-alanine from L-aspartate: step 1/1. Catalyzes the pyruvoyl-dependent decarboxylation of aspartate to produce beta-alanine. This is Aspartate 1-decarboxylase from Psychromonas ingrahamii (strain DSM 17664 / CCUG 51855 / 37).